The chain runs to 325 residues: 4-hydroxy-3-methylbut-2-enyl diphosphate reductase (325 aa).

Cys21 contributes to the [4Fe-4S] cluster binding site. Positions 50 and 83 each coordinate (2E)-4-hydroxy-3-methylbut-2-enyl diphosphate. His50 and His83 together coordinate dimethylallyl diphosphate. His50 and His83 together coordinate isopentenyl diphosphate. Cys105 is a [4Fe-4S] cluster binding site. His133 serves as a coordination point for (2E)-4-hydroxy-3-methylbut-2-enyl diphosphate. His133 is a binding site for dimethylallyl diphosphate. Position 133 (His133) interacts with isopentenyl diphosphate. Glu135 (proton donor) is an active-site residue. (2E)-4-hydroxy-3-methylbut-2-enyl diphosphate is bound at residue Thr173. Position 203 (Cys203) interacts with [4Fe-4S] cluster. 4 residues coordinate (2E)-4-hydroxy-3-methylbut-2-enyl diphosphate: Ser231, Ser232, Asn233, and Ser275. 4 residues coordinate dimethylallyl diphosphate: Ser231, Ser232, Asn233, and Ser275. Isopentenyl diphosphate contacts are provided by Ser231, Ser232, Asn233, and Ser275.

The protein belongs to the IspH family. Requires [4Fe-4S] cluster as cofactor.

It catalyses the reaction isopentenyl diphosphate + 2 oxidized [2Fe-2S]-[ferredoxin] + H2O = (2E)-4-hydroxy-3-methylbut-2-enyl diphosphate + 2 reduced [2Fe-2S]-[ferredoxin] + 2 H(+). The catalysed reaction is dimethylallyl diphosphate + 2 oxidized [2Fe-2S]-[ferredoxin] + H2O = (2E)-4-hydroxy-3-methylbut-2-enyl diphosphate + 2 reduced [2Fe-2S]-[ferredoxin] + 2 H(+). The protein operates within isoprenoid biosynthesis; dimethylallyl diphosphate biosynthesis; dimethylallyl diphosphate from (2E)-4-hydroxy-3-methylbutenyl diphosphate: step 1/1. Its pathway is isoprenoid biosynthesis; isopentenyl diphosphate biosynthesis via DXP pathway; isopentenyl diphosphate from 1-deoxy-D-xylulose 5-phosphate: step 6/6. Catalyzes the conversion of 1-hydroxy-2-methyl-2-(E)-butenyl 4-diphosphate (HMBPP) into a mixture of isopentenyl diphosphate (IPP) and dimethylallyl diphosphate (DMAPP). Acts in the terminal step of the DOXP/MEP pathway for isoprenoid precursor biosynthesis. In Bordetella pertussis (strain Tohama I / ATCC BAA-589 / NCTC 13251), this protein is 4-hydroxy-3-methylbut-2-enyl diphosphate reductase.